Here is a 392-residue protein sequence, read N- to C-terminus: MKGLDDSIGRFLDGLDQAGRKRVLRPVDPLPAGRVRVGGRELVNFSSNDYLGLSRHPEVVERSRRWLNEYGAGSGASRLVTGHLAAMEALEAKIARCKQTEAALILASGWQCNASVLPALLDKALWGAEPLVFADKLIHASLHAGLELSGARRYRYRHDDLDHLESLLKAHADKEGPRFIVTETVFSMDGDVTDMAALAALASRWDAFLYVDEAHATGVLGANGFGLSPGMGAELAMGTFSKGLGSFGAYVACSARLRHYLINRASGLIYATGLPPAVLGAIDAALDLVPRLEGERTRLQMMGRRLRDGLRAAGLDTGPSASQIVPLILGDEGRTLAVAKALEDRGILGIAIRPPTVPPGTSRIRFALSAVHSDADLDRLLAAILDAVEATP.

Arginine 22 contributes to the substrate binding site. Pyridoxal 5'-phosphate is bound at residue 109-110 (GW). Histidine 139 provides a ligand contact to substrate. Pyridoxal 5'-phosphate contacts are provided by residues serine 187, 212–215 (DEAH), and 239–242 (TFSK). Lysine 242 carries the N6-(pyridoxal phosphate)lysine modification. Threonine 356 contacts substrate.

It belongs to the class-II pyridoxal-phosphate-dependent aminotransferase family. BioF subfamily. In terms of assembly, homodimer. The cofactor is pyridoxal 5'-phosphate.

The enzyme catalyses 6-carboxyhexanoyl-[ACP] + L-alanine + H(+) = (8S)-8-amino-7-oxononanoate + holo-[ACP] + CO2. It participates in cofactor biosynthesis; biotin biosynthesis. Catalyzes the decarboxylative condensation of pimeloyl-[acyl-carrier protein] and L-alanine to produce 8-amino-7-oxononanoate (AON), [acyl-carrier protein], and carbon dioxide. The chain is Putative 8-amino-7-oxononanoate synthase (bioF) from Paramagnetospirillum magneticum (strain ATCC 700264 / AMB-1) (Magnetospirillum magneticum).